The primary structure comprises 406 residues: S-adenosylmethionine synthase (406 aa).

140–145 (GRGSVD) is an ATP binding site.

The protein belongs to the AdoMet synthase 2 family. Requires Mg(2+) as cofactor.

The enzyme catalyses L-methionine + ATP + H2O = S-adenosyl-L-methionine + phosphate + diphosphate. The protein operates within amino-acid biosynthesis; S-adenosyl-L-methionine biosynthesis; S-adenosyl-L-methionine from L-methionine: step 1/1. In terms of biological role, catalyzes the formation of S-adenosylmethionine from methionine and ATP. This is S-adenosylmethionine synthase (mat) from Aeropyrum pernix (strain ATCC 700893 / DSM 11879 / JCM 9820 / NBRC 100138 / K1).